Reading from the N-terminus, the 38-residue chain is Turripeptide GpIAa (38 aa).

The protein belongs to the turripeptide family. As to expression, expressed by the venom duct.

The protein resides in the secreted. This Cryptogemma periscelida (Atlantic gem-turris) protein is Turripeptide GpIAa.